Consider the following 124-residue polypeptide: uncharacterized protein (124 aa).

This protein may be involved in virus assembly. This is an uncharacterized protein from Sulfolobus spindle-shape virus 1 (SSV1).